We begin with the raw amino-acid sequence, 580 residues long: RuBisCO large subunit-binding protein subunit alpha, chloroplastic (580 aa).

Over residues 1–17 the composition is skewed to polar residues; that stretch reads MAQSQLAKGSRQTTGRP. A disordered region spans residues 1–24; the sequence is MAQSQLAKGSRQTTGRPFQNKPAR.

It belongs to the chaperonin (HSP60) family. Oligomer of probably six alpha and six beta subunits.

The protein resides in the plastid. The protein localises to the chloroplast. Functionally, this protein binds RuBisCO small and large subunits and is implicated in the assembly of the enzyme oligomer. This Chlamydomonas reinhardtii (Chlamydomonas smithii) protein is RuBisCO large subunit-binding protein subunit alpha, chloroplastic.